A 958-amino-acid polypeptide reads, in one-letter code: Isoleucine--tRNA ligase (958 aa).

The segment at 1-32 (MSDNQNKPGKPAAKPQSKYPVNMTDTPFPMRG) is disordered. Residues 71–81 (PYANGDIHLGH) carry the 'HIGH' region motif. Glu590 provides a ligand contact to L-isoleucyl-5'-AMP. The 'KMSKS' region signature appears at 631-635 (KMSKS). Residue Lys634 coordinates ATP. 4 residues coordinate Zn(2+): Cys921, Cys924, Cys941, and Cys944.

It belongs to the class-I aminoacyl-tRNA synthetase family. IleS type 1 subfamily. As to quaternary structure, monomer. The cofactor is Zn(2+).

It localises to the cytoplasm. The catalysed reaction is tRNA(Ile) + L-isoleucine + ATP = L-isoleucyl-tRNA(Ile) + AMP + diphosphate. Catalyzes the attachment of isoleucine to tRNA(Ile). As IleRS can inadvertently accommodate and process structurally similar amino acids such as valine, to avoid such errors it has two additional distinct tRNA(Ile)-dependent editing activities. One activity is designated as 'pretransfer' editing and involves the hydrolysis of activated Val-AMP. The other activity is designated 'posttransfer' editing and involves deacylation of mischarged Val-tRNA(Ile). The polypeptide is Isoleucine--tRNA ligase (Janthinobacterium sp. (strain Marseille) (Minibacterium massiliensis)).